We begin with the raw amino-acid sequence, 749 residues long: Homeobox-leucine zipper protein ROC7 (749 aa).

Residues leucine 26 to histidine 98 form a disordered region. Over residues serine 46 to methionine 57 the composition is skewed to basic and acidic residues. Gly residues predominate over residues serine 68–glycine 79. Basic residues predominate over residues arginine 86–glutamine 97. Residues arginine 88–histidine 147 constitute a DNA-binding region (homeobox). Residues glutamine 137 to tyrosine 218 are a coiled coil. The region spanning alanine 256 to serine 494 is the START domain.

This sequence belongs to the HD-ZIP homeobox family. Class IV subfamily.

The protein localises to the nucleus. Functionally, probable transcription factor. The polypeptide is Homeobox-leucine zipper protein ROC7 (ROC7) (Oryza sativa subsp. japonica (Rice)).